A 323-amino-acid polypeptide reads, in one-letter code: Beta-ketoacyl-[acyl-carrier-protein] synthase III (323 aa).

Catalysis depends on residues cysteine 113 and histidine 250. The segment at 251 to 255 (QANLR) is ACP-binding. Asparagine 280 is an active-site residue.

The protein belongs to the thiolase-like superfamily. FabH family. In terms of assembly, homodimer.

It is found in the cytoplasm. The catalysed reaction is malonyl-[ACP] + acetyl-CoA + H(+) = 3-oxobutanoyl-[ACP] + CO2 + CoA. Its pathway is lipid metabolism; fatty acid biosynthesis. In terms of biological role, catalyzes the condensation reaction of fatty acid synthesis by the addition to an acyl acceptor of two carbons from malonyl-ACP. Catalyzes the first condensation reaction which initiates fatty acid synthesis and may therefore play a role in governing the total rate of fatty acid production. Possesses both acetoacetyl-ACP synthase and acetyl transacylase activities. Its substrate specificity determines the biosynthesis of branched-chain and/or straight-chain of fatty acids. The sequence is that of Beta-ketoacyl-[acyl-carrier-protein] synthase III from Paracoccus denitrificans (strain Pd 1222).